Consider the following 898-residue polypeptide: Putative aconitate hydratase, cytoplasmic (898 aa).

Substrate-binding positions include glutamine 90 and aspartate 209–histidine 211. Cysteine 441, cysteine 507, and cysteine 510 together coordinate [4Fe-4S] cluster. Substrate-binding positions include arginine 540, arginine 545, arginine 703, and serine 784–arginine 785.

This sequence belongs to the aconitase/IPM isomerase family. [4Fe-4S] cluster is required as a cofactor.

It localises to the cytoplasm. It carries out the reaction citrate = D-threo-isocitrate. It functions in the pathway carbohydrate metabolism; glyoxylate and dicarboxylate metabolism. Functionally, catalyzes the isomerization of citrate to isocitrate via cis-aconitate. In Oryza sativa subsp. japonica (Rice), this protein is Putative aconitate hydratase, cytoplasmic.